The following is a 213-amino-acid chain: ATP phosphoribosyltransferase (213 aa).

The protein belongs to the ATP phosphoribosyltransferase family. Short subfamily. In terms of assembly, heteromultimer composed of HisG and HisZ subunits.

It is found in the cytoplasm. It catalyses the reaction 1-(5-phospho-beta-D-ribosyl)-ATP + diphosphate = 5-phospho-alpha-D-ribose 1-diphosphate + ATP. It functions in the pathway amino-acid biosynthesis; L-histidine biosynthesis; L-histidine from 5-phospho-alpha-D-ribose 1-diphosphate: step 1/9. In terms of biological role, catalyzes the condensation of ATP and 5-phosphoribose 1-diphosphate to form N'-(5'-phosphoribosyl)-ATP (PR-ATP). Has a crucial role in the pathway because the rate of histidine biosynthesis seems to be controlled primarily by regulation of HisG enzymatic activity. The protein is ATP phosphoribosyltransferase (hisG) of Listeria innocua serovar 6a (strain ATCC BAA-680 / CLIP 11262).